The chain runs to 451 residues: Ribonuclease J (451 aa).

Zn(2+) contacts are provided by His-84, His-86, Asp-88, His-89, His-155, and Asp-177. 384–388 (HVSGH) lines the substrate pocket. Zn(2+) is bound at residue His-410.

The protein belongs to the metallo-beta-lactamase superfamily. RNA-metabolizing metallo-beta-lactamase-like family. Archaeal RNase J subfamily. As to quaternary structure, homodimer. It depends on Zn(2+) as a cofactor.

It localises to the cytoplasm. Inhibited by 1,10-phenanthroline. A highly processive 5'-3' exoribonuclease; no evidence has been seen for endonuclease activity. Prefers 5'-phosphate or 5'-hydroxyl ends; 5'-triphosphate substrates are very poorly degraded, does not degrade circular RNA. Does not degrade pre-tRNA(Trp) suggesting it is inhibited by strong secondary structures. Also degrades ssNDA but not dsDNA. In Pyrococcus abyssi (strain GE5 / Orsay), this protein is Ribonuclease J.